We begin with the raw amino-acid sequence, 273 residues long: 3-((Z)-2-isocyanoethenyl)-1H-indole synthase (273 aa).

Residues histidine 105, aspartate 107, and histidine 254 each contribute to the Fe cation site.

This sequence belongs to the TfdA dioxygenase family. It depends on Fe(2+) as a cofactor.

The catalysed reaction is (2S)-3-(1H-indol-3-yl)-2-isocyanopropanoate + 2-oxoglutarate + O2 + H(+) = 3-[(Z)-2-isocyanoethenyl]-1H-indole + succinate + 2 CO2 + H2O. Its function is as follows. Involved in the biosynthesis of ambiguines, a family of hapalindole-type alkaloids. Responsible for the synthesis of Z-3-(2-isocyanoethen)-indole, a biosynthetic precursor to all ambiguines. This is 3-((Z)-2-isocyanoethenyl)-1H-indole synthase from Fischerella ambigua (strain UTEX 1903).